The following is a 502-amino-acid chain: D-erythritol 1-phosphate dehydrogenase (502 aa).

8 to 36 (DLFVIGGGINGAGVARDAAGRGLKVVLAE) is a binding site for FAD.

The protein belongs to the FAD-dependent glycerol-3-phosphate dehydrogenase family. It depends on FAD as a cofactor.

The enzyme catalyses D-erythritol 1-phosphate + NADP(+) = D-erythrulose 1-phosphate + NADPH + H(+). It participates in carbohydrate metabolism; erythritol degradation. In terms of biological role, catalyzes the oxydation of D-erythritol 1-phosphate to D-erythrulose 1-phosphate. The protein is D-erythritol 1-phosphate dehydrogenase of Brucella abortus (strain 2308).